Reading from the N-terminus, the 368-residue chain is MTVKLTIDCMGGDHGPSVTVPAAVNFVRSHPDAELLLVGIESAIRAQLKKLKAQDLPALTVVPASEIVAMDDPVEVALRKKKDSSMRVALNRVKEGEAQACVSAGNTGALMAVSRYVLKTLSGIERPAIASALPNPNGYTMMLDLGANVDCEPQHLLQFAEMGHALVSALEGKDRPTIGLLNIGEEVIKGNDTIKRAGELLRASTLNFHGNVEGNDIFKGTVDVIVCDGFVGNVALKTSEGLAQMLSNIIKEEFGRSWLTKVMAVLALPVLMRFKKRVDHRQYNGAALLGLRGLVIKSHGSADAYGFEWAIKRGYDAVKNGVLERLARAMEENAGSLEQAARDASGAGQASPIAGQPAEPYAAQSSKA.

Residues 337–368 (LEQAARDASGAGQASPIAGQPAEPYAAQSSKA) form a disordered region.

The protein belongs to the PlsX family. Homodimer. Probably interacts with PlsY.

It localises to the cytoplasm. It carries out the reaction a fatty acyl-[ACP] + phosphate = an acyl phosphate + holo-[ACP]. The protein operates within lipid metabolism; phospholipid metabolism. In terms of biological role, catalyzes the reversible formation of acyl-phosphate (acyl-PO(4)) from acyl-[acyl-carrier-protein] (acyl-ACP). This enzyme utilizes acyl-ACP as fatty acyl donor, but not acyl-CoA. This Paraburkholderia phytofirmans (strain DSM 17436 / LMG 22146 / PsJN) (Burkholderia phytofirmans) protein is Phosphate acyltransferase.